The primary structure comprises 230 residues: Homeobox protein Hox-B5 (230 aa).

A disordered region spans residues Gly1–Pro135. A compositionally biased stretch (polar residues) spans Phe49–Leu65. A compositionally biased stretch (low complexity) spans Ala87–Ser103. The Antp-type hexapeptide signature appears at Ile137–Arg142. Residues Gly155 to Asn214 constitute a DNA-binding region (homeobox).

It belongs to the Antp homeobox family.

The protein localises to the nucleus. Functionally, sequence-specific transcription factor which is part of a developmental regulatory system that provides cells with specific positional identities on the anterior-posterior axis. This is Homeobox protein Hox-B5 (hoxb5) from Xenopus laevis (African clawed frog).